The sequence spans 288 residues: Methyltransferase ucsB (288 aa).

S-adenosyl-L-methionine is bound by residues D87 and 121–122; that span reads DA.

It belongs to the class I-like SAM-binding methyltransferase superfamily.

The protein operates within mycotoxin biosynthesis. Methyltransferase; part of the gene cluster that mediates the biosynthesis of UCS1025A, a member of the pyrrolizidinone family that acts as a strong telomerase inhibitor and displays potent antibacterial and antitumor properties. These compounds share a hemiaminal-containing pyrrolizidinone core fused with a gamma-lactone, giving a furopyrrolizidine that is connected to a decalin fragment. The polyketide synthase module (PKS) of the PKS-NRPS ucsA is responsible for the synthesis of the polyketide backbone via the condensation of an acetyl-CoA starter unit with 6 malonyl-CoA units. The downstream nonribosomal peptide synthetase (NRPS) module then amidates the carboxyl end of the polyketide with a 2S,3S-methylproline derived from L-isoleucine by the 2-oxoglutarate-dependent dioxygenase ucsF which converts L-isoleucine to (4S,5S)-4-methylpyrroline-5-carboxylate that is further converted to 2S,3S-methylproline by the pyrroline-5-carboxylate reductase ucsG. Reductive release of the completed aminoacyl polyketide from the assembly line can form the 3-pyrrolin-2-one structure via an intramolecular Knoevenagel reaction. Because ucsA lacks a designated enoylreductase (ER) domain, the required activity is provided the enoyl reductase ucsL. This keto acyclic precursor is the substrate of the Diels-Alderase ucsH, that catalyzes the Diels-Alder cycloaddition. Oxidation of the 3S-methyl group to a carboxylate by the cytochrome P450 monooxygenase ucsK allows an oxa-Michael cyclization that might involve the reductase/dehydrogenase ucsI and which furnishes the furopyrrolizidine. The oxidase ucsJ likely plays a critical role in stereoselective reduction of the C5-C6 double bond to afford the required R-configured carboxylate group. Further enolization and oxidation at C5 by an unidentified enzyme affords the last intermediate that can undergo oxa-Michael cyclization to yield UCS1025A. This is Methyltransferase ucsB from Acremonium sp.